The primary structure comprises 434 residues: Transcription elongation factor B polypeptide 3 (434 aa).

Residues 142 to 161 form a disordered region; it reads KPEPVDVHEQQASSSSMSYQ. Residues 151-160 are compositionally biased toward polar residues; that stretch reads QQASSSSMSY. Positions 221–230 are BC box; it reads TLVSLCQTVL. Residues 237–281 enclose the F-box domain; sequence IDHVGIVPFDLLKPVLDHASTDQLRHILDVNPMLVEDADEMFHEM. The interval 391–415 is disordered; sequence ITPRGGGVPSTSRSRSNNNNNMNNG.

In terms of assembly, heterotrimer of an A, B and C subunit.

It is found in the nucleus. SIII, also known as elongin, is a general transcription elongation factor that increases the RNA polymerase II transcription elongation past template-encoded arresting sites. Subunit A is transcriptionally active and its transcription activity is strongly enhanced by binding to the dimeric complex of the SIII regulatory subunits B and C (elongin BC complex). The protein is Transcription elongation factor B polypeptide 3 of Caenorhabditis elegans.